Reading from the N-terminus, the 998-residue chain is Protein Smaug (998 aa).

Positions 1-37 (MKYATGTDNAMTSGISGQTNNSNSASNEMQPTTSTPT) are enriched in polar residues. Disordered regions lie at residues 1–45 (MKYA…EATS), 50–69 (TATYANGNPNPSANPSQSQP), and 329–370 (LCPA…GSSS). Positions 329–338 (LCPASGSRSS) are enriched in low complexity. Residues Ser-564 and Ser-575 each carry the phosphoserine modification. Residues 583 to 763 (EFKPNYIKFH…KDLKFKLSKM (181 aa)) are interaction with cup. The SAM domain maps to 600–654 (GIGLWLKSLRLHKYIELFKNMTYEEMLLITEDFLQSVGVTKGASHKLALCIDKLK). 2 disordered regions span residues 773–892 (HVKP…MQQM) and 942–977 (NNGSNDNLGLERNQQPQQQQQRKLSGGVSSAEQQPK). Composition is skewed to polar residues over residues 801–822 (KSGSNDRINNRKNSNDMLNFSL) and 854–864 (HQPQYKSSSYP). Ser-971 carries the phosphoserine modification.

The protein belongs to the SMAUG family. As to quaternary structure, interacts with oskar (osk). Binds to the 3'-UTR of nos. Interacts with cup, which in turn recruits eIF4-E, leading to an indirect interaction between smg and eIF4-E that prevents mRNA translation.

It is found in the cytoplasm. Translation regulator that binds to the 3'-UTR of specific mRNAs such as nanos (nos) and prevent their translation. Prevents translation of unlocalized nos in the bulk cytoplasm via the recruitment of cup. The polypeptide is Protein Smaug (Drosophila simulans (Fruit fly)).